Here is a 439-residue protein sequence, read N- to C-terminus: MLKIFNTLTRQKEEFKPIHAGEVGMYVCGITVYDLCHIGHGRTFVAFDVVARYLRFLGYKLKYVRNITDIDDKIIKRANENGESFVALVDRMIAEMHKDFDALNILRPDMEPRATHHIAEIIELTEQLIAKGHAYVADNGDVMFDVPTDPTYGVLSRQDLDQLQAGARVDVVDDKRNPMDFVLWKMSKEGEPSWPSPWGAGRPGWHIECSAMNCKQLGNHFDIHGGGSDLMFPHHENEIAQSTCAHDGQYVNYWMHSGMVMVDREKMSKSLGNFFTVRDVLKYYDAETVRYFLMSGHYRSQLNYSEENLKQTRAALERLYTALRGTDKTVAPAGGEAFEARFIEAMDDDFNTPEAYSVLFDMAREVNRLKAEDMAAANAMASHLRKLSAVLGLLEQEPEAFLQSGAQADDSEVAEIEALIQQRLDARKAKDWAGGRCGT.

Cysteine 28 contributes to the Zn(2+) binding site. Residues 30–40 (ITVYDLCHIGH) carry the 'HIGH' region motif. The Zn(2+) site is built by cysteine 209, histidine 234, and glutamate 238. The 'KMSKS' region motif lies at 266–270 (KMSKS). Lysine 269 lines the ATP pocket.

It belongs to the class-I aminoacyl-tRNA synthetase family. In terms of assembly, monomer. Zn(2+) serves as cofactor.

Its subcellular location is the cytoplasm. It carries out the reaction tRNA(Cys) + L-cysteine + ATP = L-cysteinyl-tRNA(Cys) + AMP + diphosphate. In Shigella boydii serotype 4 (strain Sb227), this protein is Cysteine--tRNA ligase.